A 486-amino-acid chain; its full sequence is Nucleolar protein 56 (486 aa).

The Nop domain maps to 298-416; sequence CAPSLSALIG…VEDRLEYFTS (119 aa). The tract at residues 450 to 486 is disordered; the sequence is KKAKRLAEESVTATAEAEVDEDAPKPKKKKKSKAGDE. A compositionally biased stretch (basic residues) spans 475-486; that stretch reads PKKKKKSKAGDE.

It belongs to the NOP5/NOP56 family.

The protein localises to the nucleus. Its subcellular location is the nucleolus. Required for 60S ribosomal subunit synthesis. The polypeptide is Nucleolar protein 56 (Caenorhabditis elegans).